The primary structure comprises 61 residues: Probable tautomerase SERP0934 (61 aa).

P2 acts as the Proton acceptor; via imino nitrogen in catalysis.

This sequence belongs to the 4-oxalocrotonate tautomerase family.

The sequence is that of Probable tautomerase SERP0934 from Staphylococcus epidermidis (strain ATCC 35984 / DSM 28319 / BCRC 17069 / CCUG 31568 / BM 3577 / RP62A).